A 337-amino-acid chain; its full sequence is Hsp90 co-chaperone Cdc37-like 1 (337 aa).

Positions 1-11 (MEQPWPPPGPW) are enriched in pro residues. Residues 1–42 (MEQPWPPPGPWSLPRAEGEAEEENDLDVFPSSPRCPQLPGGS) form a disordered region. The segment at 2–171 (EQPWPPPGPW…YEQKIRHFGM (170 aa)) is self-association. A phosphoserine mark is found at Ser-32 and Ser-88. Residues 85-122 (NSESLDQEHAKAQIAVSELRQREEEWRQKEEALVQREK) are a coiled coil. The segment at 147–277 (KDTEDEDKSE…SRVRLYSQSQ (131 aa)) is self-association and interaction with Hsp90. Positions 267 to 337 (KSRVRLYSQS…DDEPKMMDTV (71 aa)) are interaction with Hsp70. Residues 278-337 (SFQPMTVQNHVPHSGVGSIGLLESLPQNPDYLQYSINTALCSLNSVVHKEDDEPKMMDTV) form a required for interaction with STIP1 region.

It belongs to the CDC37 family. Self-associates. Forms complexes with Hsp70 and Hsp90. Interacts with CDC37, FKBP4, PPID and STIP1.

The protein resides in the cytoplasm. Co-chaperone that binds to numerous proteins and promotes their interaction with Hsp70 and Hsp90. In Pongo abelii (Sumatran orangutan), this protein is Hsp90 co-chaperone Cdc37-like 1 (CDC37L1).